A 62-amino-acid chain; its full sequence is Small ribosomal subunit protein eS31 (62 aa).

Zn(2+) is bound by residues C29, C32, C48, and C51. The C4-type zinc-finger motif lies at 29 to 51; it reads CPRCGSFMAFHKWPVPRWHCGKC.

Belongs to the eukaryotic ribosomal protein eS31 family. Part of the 30S ribosomal subunit. It depends on Zn(2+) as a cofactor.

The protein is Small ribosomal subunit protein eS31 of Hyperthermus butylicus (strain DSM 5456 / JCM 9403 / PLM1-5).